Reading from the N-terminus, the 100-residue chain is UPF0248 protein APE_0939 (100 aa).

It belongs to the UPF0248 family.

The sequence is that of UPF0248 protein APE_0939 from Aeropyrum pernix (strain ATCC 700893 / DSM 11879 / JCM 9820 / NBRC 100138 / K1).